The primary structure comprises 1097 residues: Kinesin-like protein KIF1C (1097 aa).

A Kinesin motor domain is found at 5–347; it reads SVKVAVRVRP…LRYADRTKQI (343 aa). 96-103 is a binding site for ATP; that stretch reads GQTGAGKS. Ser-294 bears the Phosphoserine mark. The stretch at 358–380 forms a coiled coil; the sequence is NARLIRELQEEVARLRELLMAQG. The disordered stretch occupies residues 397-434; the sequence is GGVLPAASSPPAPASPSSPPPHNGELEPSFSPSAEPQI. A compositionally biased stretch (pro residues) spans 404 to 418; it reads SSPPAPASPSSPPPH. Residues 437 to 478 adopt a coiled-coil conformation; sequence EEAMERLQETEKIIAELNETWEEKLRKTEALRMEREALLAEM. Ser-491 is subject to Phosphoserine. Residues 520-587 enclose the FHA domain; that stretch reads TRVGQVDVDI…LKSGNRIVMG (68 aa). A coiled-coil region spans residues 630–671; the sequence is EQQGIDIKLEMEKRLQDLENQYRKEKEEADLLLEQQRLYADS. Phosphoserine occurs at positions 671 and 673. A coiled-coil region spans residues 824 to 868; sequence AEVEDLRAHIDKLTGILQEVKLQNSSKDRELQALRDRMLRMERVI. Disordered stretches follow at residues 897 to 921 and 946 to 1097; these read EAVSNDHSPAVRPSSPPQSSWERVS and QGLQ…GAAV. Ser-911 carries the phosphoserine modification. The span at 949–958 shows a compositional bias: gly residues; sequence QGSGGRGGGL. Residues 997 to 1015 are compositionally biased toward pro residues; the sequence is GPQPPEEVTAPPPPPNRRP. The segment covering 1016–1026 has biased composition (basic residues); sequence PSPRRPHRPRR. Ser-1028 carries the phosphoserine modification. Arg-1036 is modified (omega-N-methylarginine). Residues 1059–1077 show a composition bias toward pro residues; sequence QPQPYPAQRPGPRYPPYTT. A Phosphothreonine modification is found at Thr-1077. Ser-1086 carries the post-translational modification Phosphoserine. The span at 1086–1097 shows a compositional bias: basic and acidic residues; sequence SAPDLKESGAAV.

Belongs to the TRAFAC class myosin-kinesin ATPase superfamily. Kinesin family. Unc-104 subfamily.

The protein resides in the cytoplasm. Its subcellular location is the cytoskeleton. Probable motor protein. This is Kinesin-like protein KIF1C (Kif1c) from Rattus norvegicus (Rat).